The primary structure comprises 254 residues: Large ribosomal subunit protein uL15m (254 aa).

The transit peptide at 1–78 (MFNILSRVCR…GSGQRRGRRI (78 aa)) directs the protein to the mitochondrion. The interval 44–104 (NYQSKKRVGR…KVGHSTGHLK (61 aa)) is disordered. Basic residues predominate over residues 64 to 79 (GRGHKGSGQRRGRRIK).

The protein belongs to the universal ribosomal protein uL15 family. Component of the mitochondrial large ribosomal subunit (mt-LSU). Mature yeast 74S mitochondrial ribosomes consist of a small (37S) and a large (54S) subunit. The 37S small subunit contains a 15S ribosomal RNA (15S mt-rRNA) and at least 32 different proteins. The 54S large subunit contains a 21S rRNA (21S mt-rRNA) and at least 45 different proteins.

Its subcellular location is the mitochondrion. In terms of biological role, component of the mitochondrial ribosome (mitoribosome), a dedicated translation machinery responsible for the synthesis of mitochondrial genome-encoded proteins, including at least some of the essential transmembrane subunits of the mitochondrial respiratory chain. The mitoribosomes are attached to the mitochondrial inner membrane and translation products are cotranslationally integrated into the membrane. The polypeptide is Large ribosomal subunit protein uL15m (mrpl10) (Schizosaccharomyces pombe (strain 972 / ATCC 24843) (Fission yeast)).